Reading from the N-terminus, the 102-residue chain is Polymeric immunoglobulin receptor (102 aa).

As to quaternary structure, interacts (mainly via CDR1-like domain) with dimeric IgA. Interacts (mainly via CDR2-like domain) with pentameric IgM. Either free or part of the secretory IgA (sIgA) complex that consists of two, four or five IgA monomers, and two additional non-Ig polypeptides, namely the JCHAIN and the secretory component (the proteolytic product of PIGR). Free secretory component interacts with bacterial antigens toxA of C.difficile and eaeA of E.coli. N-glycosylated. N-glycosylation is required for anchoring IgA molecules to mucus, but is not necessary for Ig binding.

The protein localises to the cell membrane. It localises to the secreted. Functionally, mediates selective transcytosis of polymeric IgA and IgM across mucosal epithelial cells. Binds polymeric IgA and IgM at the basolateral surface of epithelial cells. The complex is then transported across the cell to be secreted at the apical surface. During this process, a cleavage occurs that separates the extracellular (known as the secretory component) from the transmembrane segment. Through its N-linked glycans ensures anchoring of secretory IgA (sIgA) molecules to mucus lining the epithelial surface to neutralize extracellular pathogens. On its own (free form) may act as a non-specific microbial scavenger to prevent pathogen interaction with epithelial cells. The protein is Polymeric immunoglobulin receptor (PIGR) of Sus scrofa (Pig).